The chain runs to 240 residues: Pyridoxine 5'-phosphate synthase (240 aa).

3-amino-2-oxopropyl phosphate is bound at residue Asn-7. Position 9 to 10 (9 to 10 (DH)) interacts with 1-deoxy-D-xylulose 5-phosphate. Arg-18 contacts 3-amino-2-oxopropyl phosphate. His-43 acts as the Proton acceptor in catalysis. 1-deoxy-D-xylulose 5-phosphate-binding residues include Arg-45 and His-50. The Proton acceptor role is filled by Glu-70. Thr-100 is a 1-deoxy-D-xylulose 5-phosphate binding site. The active-site Proton donor is the His-191. Residues Gly-192 and 213 to 214 (GH) contribute to the 3-amino-2-oxopropyl phosphate site.

This sequence belongs to the PNP synthase family. In terms of assembly, homooctamer; tetramer of dimers.

It is found in the cytoplasm. It catalyses the reaction 3-amino-2-oxopropyl phosphate + 1-deoxy-D-xylulose 5-phosphate = pyridoxine 5'-phosphate + phosphate + 2 H2O + H(+). It functions in the pathway cofactor biosynthesis; pyridoxine 5'-phosphate biosynthesis; pyridoxine 5'-phosphate from D-erythrose 4-phosphate: step 5/5. Functionally, catalyzes the complicated ring closure reaction between the two acyclic compounds 1-deoxy-D-xylulose-5-phosphate (DXP) and 3-amino-2-oxopropyl phosphate (1-amino-acetone-3-phosphate or AAP) to form pyridoxine 5'-phosphate (PNP) and inorganic phosphate. This chain is Pyridoxine 5'-phosphate synthase, found in Gloeothece citriformis (strain PCC 7424) (Cyanothece sp. (strain PCC 7424)).